The sequence spans 212 residues: Large ribosomal subunit protein uL3 (212 aa).

Belongs to the universal ribosomal protein uL3 family. Part of the 50S ribosomal subunit. Forms a cluster with proteins L14 and L19.

Its function is as follows. One of the primary rRNA binding proteins, it binds directly near the 3'-end of the 23S rRNA, where it nucleates assembly of the 50S subunit. This chain is Large ribosomal subunit protein uL3, found in Acetivibrio thermocellus (strain ATCC 27405 / DSM 1237 / JCM 9322 / NBRC 103400 / NCIMB 10682 / NRRL B-4536 / VPI 7372) (Clostridium thermocellum).